The chain runs to 408 residues: Probable cysteine desulfurase (408 aa).

Lys-225 carries the N6-(pyridoxal phosphate)lysine modification.

The protein belongs to the class-V pyridoxal-phosphate-dependent aminotransferase family. Csd subfamily. It depends on pyridoxal 5'-phosphate as a cofactor.

It catalyses the reaction (sulfur carrier)-H + L-cysteine = (sulfur carrier)-SH + L-alanine. Its function is as follows. Catalyzes the removal of elemental sulfur and selenium atoms from L-cysteine, L-cystine, L-selenocysteine, and L-selenocystine to produce L-alanine. The polypeptide is Probable cysteine desulfurase (csd) (Mycoplasma genitalium (strain ATCC 33530 / DSM 19775 / NCTC 10195 / G37) (Mycoplasmoides genitalium)).